A 334-amino-acid polypeptide reads, in one-letter code: Succinylglutamate desuccinylase (334 aa).

H59, E62, and H151 together coordinate Zn(2+). E215 is an active-site residue.

The protein belongs to the AspA/AstE family. Succinylglutamate desuccinylase subfamily. Requires Zn(2+) as cofactor.

The enzyme catalyses N-succinyl-L-glutamate + H2O = L-glutamate + succinate. It functions in the pathway amino-acid degradation; L-arginine degradation via AST pathway; L-glutamate and succinate from L-arginine: step 5/5. Functionally, transforms N(2)-succinylglutamate into succinate and glutamate. This Pseudomonas fluorescens (strain SBW25) protein is Succinylglutamate desuccinylase.